A 401-amino-acid polypeptide reads, in one-letter code: Acetate kinase (401 aa).

Residue Asn-9 coordinates Mg(2+). Lys-16 contacts ATP. Arg-88 lines the substrate pocket. The active-site Proton donor/acceptor is Asp-147. ATP-binding positions include 207–211 (HLGNG), 282–284 (DCR), and 333–337 (GIGEN). Glu-388 contacts Mg(2+).

It belongs to the acetokinase family. As to quaternary structure, homodimer. Mg(2+) serves as cofactor. Requires Mn(2+) as cofactor.

Its subcellular location is the cytoplasm. It carries out the reaction acetate + ATP = acetyl phosphate + ADP. It functions in the pathway metabolic intermediate biosynthesis; acetyl-CoA biosynthesis; acetyl-CoA from acetate: step 1/2. In terms of biological role, catalyzes the formation of acetyl phosphate from acetate and ATP. Can also catalyze the reverse reaction. The chain is Acetate kinase from Haemophilus influenzae (strain 86-028NP).